Reading from the N-terminus, the 74-residue chain is Large ribosomal subunit protein uL29 (74 aa).

Belongs to the universal ribosomal protein uL29 family.

This chain is Large ribosomal subunit protein uL29, found in Streptomyces griseus subsp. griseus (strain JCM 4626 / CBS 651.72 / NBRC 13350 / KCC S-0626 / ISP 5235).